Here is a 420-residue protein sequence, read N- to C-terminus: UDP-N-acetylglucosamine 1-carboxyvinyltransferase 1 (420 aa).

22 to 23 (KN) is a phosphoenolpyruvate binding site. Residue R91 coordinates UDP-N-acetyl-alpha-D-glucosamine. C115 acts as the Proton donor in catalysis. C115 is subject to 2-(S-cysteinyl)pyruvic acid O-phosphothioketal. UDP-N-acetyl-alpha-D-glucosamine is bound by residues 120 to 124 (RPMDL), D303, and V325.

This sequence belongs to the EPSP synthase family. MurA subfamily.

The protein localises to the cytoplasm. It catalyses the reaction phosphoenolpyruvate + UDP-N-acetyl-alpha-D-glucosamine = UDP-N-acetyl-3-O-(1-carboxyvinyl)-alpha-D-glucosamine + phosphate. Its pathway is cell wall biogenesis; peptidoglycan biosynthesis. Functionally, cell wall formation. Adds enolpyruvyl to UDP-N-acetylglucosamine. The chain is UDP-N-acetylglucosamine 1-carboxyvinyltransferase 1 from Carboxydothermus hydrogenoformans (strain ATCC BAA-161 / DSM 6008 / Z-2901).